The chain runs to 340 residues: Probable glucan endo-1,3-beta-glucosidase BG1 (340 aa).

Residues 1-25 form the signal peptide; that stretch reads MDLRFLASLTLLLGLFFVNTNPTGG. The active-site Proton donor is the Glu-120. The active-site Nucleophile is Glu-262.

Belongs to the glycosyl hydrolase 17 family.

The protein resides in the secreted. It carries out the reaction Hydrolysis of (1-&gt;3)-beta-D-glucosidic linkages in (1-&gt;3)-beta-D-glucans.. Its function is as follows. May play a role in plant defense against pathogens. The sequence is that of Probable glucan endo-1,3-beta-glucosidase BG1 from Arabidopsis thaliana (Mouse-ear cress).